Reading from the N-terminus, the 2318-residue chain is Neurogenic locus notch homolog protein 3 (2318 aa).

Residues 1–14 (MGLGARGRRRRRRL) are compositionally biased toward basic residues. A disordered region spans residues 1–20 (MGLGARGRRRRRRLMALPPP). The N-terminal stretch at 1-39 (MGLGARGRRRRRRLMALPPPPPPMRALPLLLLLAGLGAA) is a signal peptide. EGF-like domains follow at residues 40–78 (APPC…ERCQ), 79–119 (LEDP…PDCS), and 120–157 (QPDP…QSCQ). Residues 40-1643 (APPCLDGSPC…PLEAPEQSVP (1604 aa)) lie on the Extracellular side of the membrane. Intrachain disulfides connect Cys-43/Cys-55, Cys-49/Cys-66, Cys-68/Cys-77, Cys-83/Cys-94, Cys-88/Cys-107, Cys-109/Cys-118, Cys-124/Cys-135, Cys-129/Cys-145, Cys-147/Cys-156, Cys-163/Cys-175, Cys-169/Cys-184, Cys-186/Cys-195, Cys-202/Cys-213, Cys-207/Cys-223, Cys-225/Cys-234, Cys-241/Cys-252, Cys-246/Cys-261, Cys-263/Cys-272, Cys-279/Cys-292, Cys-286/Cys-301, Cys-303/Cys-312, Cys-319/Cys-330, Cys-324/Cys-339, Cys-341/Cys-350, Cys-356/Cys-367, Cys-361/Cys-378, Cys-380/Cys-389, Cys-396/Cys-409, Cys-403/Cys-418, Cys-420/Cys-429, Cys-436/Cys-447, Cys-441/Cys-456, Cys-458/Cys-467, Cys-474/Cys-485, Cys-479/Cys-494, Cys-496/Cys-505, Cys-512/Cys-523, Cys-517/Cys-532, Cys-534/Cys-543, Cys-550/Cys-560, Cys-555/Cys-569, Cys-571/Cys-580, Cys-587/Cys-598, Cys-592/Cys-607, Cys-609/Cys-618, Cys-625/Cys-635, Cys-630/Cys-644, Cys-646/Cys-655, Cys-662/Cys-673, Cys-667/Cys-682, Cys-684/Cys-693, Cys-700/Cys-710, Cys-705/Cys-719, Cys-721/Cys-730, Cys-739/Cys-750, Cys-744/Cys-759, Cys-761/Cys-770, Cys-776/Cys-787, Cys-781/Cys-797, Cys-799/Cys-808, Cys-815/Cys-827, Cys-821/Cys-836, Cys-838/Cys-847, Cys-854/Cys-865, Cys-859/Cys-874, Cys-876/Cys-885, Cys-892/Cys-902, Cys-897/Cys-911, Cys-913/Cys-922, Cys-929/Cys-940, Cys-934/Cys-949, Cys-951/Cys-960, Cys-967/Cys-978, Cys-972/Cys-987, Cys-989/Cys-998, Cys-1005/Cys-1016, Cys-1010/Cys-1023, Cys-1025/Cys-1034, Cys-1041/Cys-1062, Cys-1056/Cys-1071, Cys-1073/Cys-1082, Cys-1089/Cys-1100, Cys-1094/Cys-1109, Cys-1111/Cys-1120, Cys-1127/Cys-1138, Cys-1132/Cys-1147, Cys-1149/Cys-1158, Cys-1165/Cys-1183, Cys-1177/Cys-1192, Cys-1194/Cys-1203, Cys-1210/Cys-1223, Cys-1215/Cys-1233, Cys-1235/Cys-1244, Cys-1251/Cys-1262, Cys-1256/Cys-1276, Cys-1278/Cys-1287, Cys-1294/Cys-1305, Cys-1299/Cys-1314, and Cys-1316/Cys-1325. Positions 159 to 196 (DIDECRSGTTCRHGGTCLNTPGSFRCQCPLGYTGLLCE) constitute an EGF-like 4; calcium-binding domain. An EGF-like 5 domain is found at 198–235 (PVVPCAPSPCRNGGTCRQSSDVTYDCACLPGFEGQNCE). Positions 237 to 273 (NVDDCPGHRCLNGGTCVDGVNTYNCQCPPEWTGQFCT) constitute an EGF-like 6; calcium-binding domain. One can recognise an EGF-like 7 domain in the interval 275 to 313 (DVDECQLQPNACHNGGTCFNLLGGHSCVCVNGWTGESCS). The 37-residue stretch at 315-351 (NIDDCATAVCFHGATCHDRVASFYCACPMGKTGLLCH) folds into the EGF-like 8; calcium-binding domain. Residues 352–390 (LDDACVSNPCHEDAICDTNPVSGRAICTCPPGFTGGACD) enclose the EGF-like 9 domain. The region spanning 392–430 (DVDECSIGANPCEHLGRCVNTQGSFLCQCGRGYTGPRCE) is the EGF-like 10; calcium-binding domain. One can recognise an EGF-like 11; calcium-binding domain in the interval 432–468 (DVNECLSGPCRNQATCLDRIGQFTCICMAGFTGTYCE). In terms of domain architecture, EGF-like 12; calcium-binding spans 470–506 (DIDECQSSPCVNGGVCKDRVNGFSCTCPSGFSGSMCQ). In terms of domain architecture, EGF-like 13; calcium-binding spans 508-544 (DVDECASTPCRNGAKCVDQPDGYECRCAEGFEGTLCE). The EGF-like 14; calcium-binding domain occupies 546–581 (NVDDCSPDPCHHGRCVDGIASFSCACAPGYTGIRCE). The EGF-like 15; calcium-binding domain occupies 583–619 (QVDECRSQPCRYGGKCLDLVDKYLCRCPPGTTGVNCE). The EGF-like 16; calcium-binding domain maps to 621–656 (NIDDCASNPCTFGVCRDGINRYDCVCQPGFTGPLCN). Positions 658–694 (EINECASSPCGEGGSCVDGENGFHCLCPPGSLPPLCL) constitute an EGF-like 17; calcium-binding domain. EGF-like domains are found at residues 696–731 (ANHP…PRCS), 735–771 (APDA…HQCE), and 772–809 (VLSP…PRCQ). Residues 811 to 848 (DVDECAGASPCGPHGTCTNLPGNFRCICHRGYTGPFCD) form the EGF-like 21; calcium-binding domain. The EGF-like 22; calcium-binding domain maps to 850–886 (DIDDCDPNPCLHGGSCQDGVGSFSCSCLDGFAGPRCA). An EGF-like 23; calcium-binding domain is found at 888-923 (DVDECLSSPCGPGTCTDHVASFTCACPPGYGGFHCE). 5 EGF-like domains span residues 925–961 (DLPD…THCQ), 963–999 (EADP…SQCQ), 1001–1035 (PVDW…RLCD), 1037–1083 (QSLP…SHCE), and 1085–1121 (EVDP…DSCE). Residues 1123-1159 (NIDECASQPCQNGGSCIDLVARYLCSCPPGTLGVLCE) form the EGF-like 29; calcium-binding domain. One can recognise an EGF-like 30; calcium-binding domain in the interval 1161–1204 (NEDDCDLGPSLDSGVQCLHNGTCVDLVGGFRCNCPPGYTGLHCE). N-linked (GlcNAc...) asparagine glycosylation is present at Asn-1180. 4 EGF-like domains span residues 1206-1245 (DINE…PRCQ), 1247-1288 (ALSP…LRCE), 1290-1326 (VARS…PSCR), and 1336-1374 (TNAS…PRCE). The N-linked (GlcNAc...) asparagine glycan is linked to Asn-1337. 12 disulfide bridges follow: Cys-1340/Cys-1351, Cys-1345/Cys-1362, Cys-1364/Cys-1373, Cys-1388/Cys-1411, Cys-1393/Cys-1406, Cys-1402/Cys-1418, Cys-1429/Cys-1452, Cys-1434/Cys-1447, Cys-1443/Cys-1459, Cys-1468/Cys-1494, Cys-1476/Cys-1489, and Cys-1485/Cys-1501. LNR repeat units lie at residues 1388–1428 (CPRA…PWRQ), 1429–1466 (CEAL…GRDR), and 1468–1506 (CNPV…SEVP). Asn-1439 carries N-linked (GlcNAc...) asparagine glycosylation. A helical membrane pass occupies residues 1644 to 1664 (LLPLLVAGAVFLLIIFILGVM). Topologically, residues 1665 to 2318 (VARRKREHST…EVTPKRQVMA (654 aa)) are cytoplasmic. 5 ANK repeats span residues 1839–1868 (TGET…DTNA), 1872–1902 (SGRT…DLDA), 1906–1935 (DGST…DVNA), 1939–1968 (LGKS…NKDM), and 1972–2001 (KEET…NREI). 2 disordered regions span residues 2025–2045 (LDQP…PLLC) and 2058–2126 (QSGT…PLEG). The span at 2028–2045 (PSGPRSPSGPHGLGPLLC) shows a compositional bias: low complexity. Arg-2174 bears the Omega-N-methylarginine mark. A compositionally biased stretch (low complexity) spans 2184 to 2193 (SFLLPLAPGP). The segment at 2184–2318 (SFLLPLAPGP…EVTPKRQVMA (135 aa)) is disordered. The interval 2242–2261 (HPYLTPSPESPEHWASPSPP) is PEST-like. The span at 2262-2282 (SLSDWSDSTPSPATATNATAS) shows a compositional bias: low complexity. A compositionally biased stretch (polar residues) spans 2296 to 2305 (SLPQSQTQLG).

The protein belongs to the NOTCH family. As to quaternary structure, interacts with PSMA1. Heterodimer of a C-terminal fragment N(TM) and a N-terminal fragment N(EC) which are probably linked by disulfide bonds. Interacts with MAML1, MAML2 and MAML3 which act as transcriptional coactivators for NOTCH3. Interacts with HIF1AN. Post-translationally, synthesized in the endoplasmic reticulum as an inactive form which is proteolytically cleaved by a furin-like convertase in the trans-Golgi network before it reaches the plasma membrane to yield an active, ligand-accessible form. Cleavage results in a C-terminal fragment N(TM) and a N-terminal fragment N(EC). Following ligand binding, it is cleaved by TNF-alpha converting enzyme (TACE) to yield a membrane-associated intermediate fragment called notch extracellular truncation (NEXT). This fragment is then cleaved by presenilin dependent gamma-secretase to release a notch-derived peptide containing the intracellular domain (NICD) from the membrane. In terms of processing, phosphorylated. Hydroxylated by HIF1AN. Proliferating neuroepithelium.

Its subcellular location is the cell membrane. The protein resides in the nucleus. Functionally, functions as a receptor for membrane-bound ligands Jagged1, Jagged2 and Delta1 to regulate cell-fate determination. Upon ligand activation through the released notch intracellular domain (NICD) it forms a transcriptional activator complex with RBPJ/RBPSUH and activates genes of the enhancer of split locus. Affects the implementation of differentiation, proliferation and apoptotic programs. May play a role during CNS development. This Mus musculus (Mouse) protein is Neurogenic locus notch homolog protein 3 (Notch3).